We begin with the raw amino-acid sequence, 164 residues long: Phosphopantetheine adenylyltransferase (164 aa).

S9 contributes to the substrate binding site. ATP-binding positions include 9-10 (SF) and H17. Residues K41, A78, and R92 each contribute to the substrate site. ATP contacts are provided by residues 93 to 95 (GLR), E103, and 128 to 134 (SRPITAT).

The protein belongs to the bacterial CoaD family. Homohexamer. Mg(2+) is required as a cofactor.

The protein resides in the cytoplasm. It catalyses the reaction (R)-4'-phosphopantetheine + ATP + H(+) = 3'-dephospho-CoA + diphosphate. It functions in the pathway cofactor biosynthesis; coenzyme A biosynthesis; CoA from (R)-pantothenate: step 4/5. In terms of biological role, reversibly transfers an adenylyl group from ATP to 4'-phosphopantetheine, yielding dephospho-CoA (dPCoA) and pyrophosphate. The polypeptide is Phosphopantetheine adenylyltransferase (Allorhizobium ampelinum (strain ATCC BAA-846 / DSM 112012 / S4) (Agrobacterium vitis (strain S4))).